The sequence spans 176 residues: MESQIRQNYHHDCERAINRMINMEMFASYTYTSMAFYFSRDDVALPGFAHFFKENSEEEREHADKLLSFQNKRGGRILLQDIKKPERDEWGNGLEAMQCALQLEKNVNQALLDLHKIASDKVDPHLCDFLETHYLNEQVEAIKKLGDHITNLTKMDAVKNKMAEYLFDKHTLGGQS.

A Ferritin-like diiron domain is found at 7–156 (QNYHHDCERA…DHITNLTKMD (150 aa)). Fe cation contacts are provided by Glu-24, Glu-59, His-62, Glu-104, and Gln-138.

This sequence belongs to the ferritin family. In terms of assembly, oligomer of 24 subunits. There are at least two types of subunits. The functional molecule forms a roughly spherical shell with a diameter of 12 nm and contains a central cavity into which the insoluble mineral iron core is deposited. In terms of tissue distribution, almost exclusively in the gonads.

It carries out the reaction 4 Fe(2+) + O2 + 4 H(+) = 4 Fe(3+) + 2 H2O. In terms of biological role, stores iron in a soluble, non-toxic, readily available form. Important for iron homeostasis. Has ferroxidase activity. Iron is taken up in the ferrous form and deposited as ferric hydroxides after oxidation. This Salmo salar (Atlantic salmon) protein is Ferritin, middle subunit.